The sequence spans 105 residues: Nitrogenase-stabilizing/protective protein NifW 2 (105 aa).

The protein belongs to the NifW family.

Functionally, may protect the nitrogenase Fe-Mo protein from oxidative damage. The chain is Nitrogenase-stabilizing/protective protein NifW 2 (nifW2) from Trichormus variabilis (strain ATCC 29413 / PCC 7937) (Anabaena variabilis).